The sequence spans 219 residues: LLDTDFSIEATAATTTAGSGSKVAEASTSDYRVAVFGAGGVGKSSITQRFVKGTFNENYVPTIEDTYRQVISCNQKNVCTLQITDTTGSHQFPAMQRLSISKGNAFILIYSVTNKQSFAELVPIIEMMKEVKGNAIAETPIMLVGNKKDEESKREVSSNSGQKVATNMECGFIETSAKNNENITELFQQLLALEKKRQLALTMDDPDGKNGKKKGCHIM.

GTP contacts are provided by residues 37–44 (GAGGVGKS), 56–62 (NENYVPT), 85–89 (DTTGS), 146–149 (NKKD), and 177–178 (AK). Positions 59 to 67 (YVPTIEDTY) match the Effector region motif. Cys-216 is modified (cysteine methyl ester). A lipid anchor (S-geranylgeranyl cysteine) is attached at Cys-216. A propeptide spans 217–219 (HIM) (removed in mature form).

The protein belongs to the small GTPase superfamily. Di-Ras family. In terms of assembly, interacts with epac-1 (via C-terminus). As to expression, expressed specifically in neurons including the nerve ring, ventral and dorsal nerve cord motor neurons and tail ganglia.

It is found in the cell membrane. Functionally, displays low GTPase activity and exists predominantly in the GTP-bound form. Together with epac-1, may regulate acetylcholine release at the neuromuscular junctions probably downstream of G-protein gsa-1 and adenylate cyclase acy-1. This Caenorhabditis elegans protein is GTP-binding protein drn-1.